The following is a 260-amino-acid chain: Proliferating cell nuclear antigen (260 aa).

The DNA-binding element occupies 61-80; that stretch reads RCDRNISMGMNLGSMSKILI.

This sequence belongs to the PCNA family. In terms of assembly, homotrimer. Forms a complex with activator 1 heteropentamer in the presence of ATP.

It localises to the nucleus. This protein is an auxiliary protein of DNA polymerase delta and is involved in the control of eukaryotic DNA replication by increasing the polymerase's processibility during elongation of the leading strand. This is Proliferating cell nuclear antigen (PCNA) from Bombyx mori (Silk moth).